Consider the following 965-residue polypeptide: MSSSAADPFAARLNSDVRQRHPTASATSKNVEGTSQQKQQQQQQQSEANAAASRVKKTYGKTPDGTVFVVPTTHDMVTQLLDPREPKNLSDVAVLAIIALHFLAAYYLPWGVKRPLFAAIFMFWRLAYNVGIGYLLTIQSKYKLLVTWAKRWKLFENPATGKNPRPWLYNLLKKELETKIPQDYKFEEAPIEYNTWLTFRRVVDLILMCDFISYCLFAIVCAHKPDGEGLFMCFARWAAGITLVGFNLWVKLDAHRVVKDYAWYWGDFFYLIEQELTFDGVFELAPHPMYSIGYAGYYGISMMAASYDVLFISIIAHAAQFAFLVIVENPHIEKTYNPPQPRVRCESEAGSQLQEFASEYSVPSTTGRHDNTPLPVHNLIGLKNLDFFRITDVAIVLLCAYLAVVTMVTPNTRFYQALFVLHALAWRLWYSAGLGVILTMQSEEKMFTRHFLKYGESVGEAWRQWKGIYHLSNCLCHASFIAASYKMYEFPADWTYGWALLKHVVGLSLIALQVWTATSIYESLGEFGWFYGDFFFDSKRQLTYTSIYRFLNNPERVFGTAGLWGAALITWSRAIFLMALAGHFLTLAFLAYVEKPHMQKVYGRNLRDDAGVTKFIKRSLPPPVTEWQQSIDKVLDETKHFIDEFVDAARSRLATGSSTIVKDTSALFNKYPARLTLSKISPDLAGYDPKHYGLSLAGTRVVGTNEKATGKESPNARVLKDVKTQAFEYGAPIRVKWTAPANHSKKDWVGLYMVTDNRSREVTEVPSLGRWVPTNPGEYDTTTDQGILVWDQPVEKKSEDTDLVEGEMVFEGDKLWWTQGVFEFRYHHGGGHHVMSISEPFEIQIPKFDDEHMGVDISGEVGERAVEAALLPVIRNCLDRDPDIAPSNAEERFGGHVERDGKYARRVVYAIRHMFGIDFAPAVVLADGNVRRLAWRICHAKEVLAPFSMSHTNGRTTPVDSKFSE.

Residues Met1–Val55 form a disordered region. Residues Met1–Asp91 lie on the Lumenal side of the membrane. Polar residues predominate over residues Pro22–Ser35. Low complexity predominate over residues Gln36–Gln45. A helical membrane pass occupies residues Val92–Val112. The Cytoplasmic portion of the chain corresponds to Lys113–Pro115. A helical membrane pass occupies residues Leu116–Leu136. Over Thr137–Arg201 the chain is Lumenal. A helical membrane pass occupies residues Val202 to Ala222. The Cytoplasmic segment spans residues His223 to Gly229. Residues Leu230–Val250 traverse the membrane as a helical segment. The Lumenal segment spans residues Lys251–Asp279. The helical transmembrane segment at Gly280–Ile300 threads the bilayer. Residues Ser301–Ser306 lie on the Cytoplasmic side of the membrane. The chain crosses the membrane as a helical span at residues Tyr307–Val327. Residues Glu328–Arg389 lie on the Lumenal side of the membrane. Residues Ile390–Pro410 form a helical membrane-spanning segment. The Cytoplasmic segment spans residues Asn411 to Ala417. Residues Leu418–Leu438 traverse the membrane as a helical segment. At Thr439–Gly467 the chain is on the lumenal side. A helical transmembrane segment spans residues Ile468–Tyr488. Residues Glu489–Tyr496 lie on the Cytoplasmic side of the membrane. A helical transmembrane segment spans residues Gly497–Ala517. Topologically, residues Thr518–Arg573 are lumenal. The chain crosses the membrane as a helical span at residues Ala574–Glu594. Over Lys595–Glu965 the chain is Cytoplasmic.

Belongs to the class VI-like SAM-binding methyltransferase superfamily. CHO2 family.

Its subcellular location is the endoplasmic reticulum membrane. The catalysed reaction is a 1,2-diacyl-sn-glycero-3-phosphoethanolamine + S-adenosyl-L-methionine = a 1,2-diacyl-sn-glycero-3-phospho-N-methylethanolamine + S-adenosyl-L-homocysteine + H(+). It participates in phospholipid metabolism; phosphatidylcholine biosynthesis. Functionally, catalyzes the first step of the methylation pathway of phosphatidylcholine biosynthesis, the SAM-dependent methylation of phosphatidylethanolamine (PE) to phosphatidylmonomethylethanolamine (PMME). This chain is Phosphatidylethanolamine N-methyltransferase, found in Neurospora crassa (strain ATCC 24698 / 74-OR23-1A / CBS 708.71 / DSM 1257 / FGSC 987).